A 105-amino-acid chain; its full sequence is U1-sicaritoxin-Li1b (105 aa).

The N-terminal stretch at 1-19 is a signal peptide; that stretch reads MKLLFEGLLVLVLIAFVVA. Residues 20-36 constitute a propeptide that is removed on maturation; that stretch reads EFESDAEKWEALITQER. Intrachain disulfides connect cysteine 38–cysteine 55, cysteine 46–cysteine 60, cysteine 54–cysteine 73, and cysteine 62–cysteine 71. Arginine 82 carries the post-translational modification Arginine amide. The propeptide occupies 86–105; the sequence is ALMVDPETHRMLSLHRLSEE.

The protein belongs to the neurotoxin 28 (Litx) family. As to expression, expressed by the venom gland.

The protein resides in the secreted. Functionally, toxin active against insects (S.frugiperda larvae). May act on sodium (Nav) or calcium (Cav) channels. The polypeptide is U1-sicaritoxin-Li1b (Loxosceles intermedia (Brown spider)).